The sequence spans 210 residues: Chaperone protein TorD (210 aa).

Belongs to the TorD/DmsD family. TorD subfamily.

Its subcellular location is the cytoplasm. In terms of biological role, involved in the biogenesis of TorA. Acts on TorA before the insertion of the molybdenum cofactor and, as a result, probably favors a conformation of the apoenzyme that is competent for acquiring the cofactor. The chain is Chaperone protein TorD from Salmonella arizonae (strain ATCC BAA-731 / CDC346-86 / RSK2980).